A 161-amino-acid chain; its full sequence is S-ribosylhomocysteine lyase (161 aa).

Residues histidine 53, histidine 57, and cysteine 124 each coordinate Fe cation.

It belongs to the LuxS family. In terms of assembly, homodimer. It depends on Fe cation as a cofactor.

The catalysed reaction is S-(5-deoxy-D-ribos-5-yl)-L-homocysteine = (S)-4,5-dihydroxypentane-2,3-dione + L-homocysteine. In terms of biological role, involved in the synthesis of autoinducer 2 (AI-2) which is secreted by bacteria and is used to communicate both the cell density and the metabolic potential of the environment. The regulation of gene expression in response to changes in cell density is called quorum sensing. Catalyzes the transformation of S-ribosylhomocysteine (RHC) to homocysteine (HC) and 4,5-dihydroxy-2,3-pentadione (DPD). The polypeptide is S-ribosylhomocysteine lyase (Phocaeicola vulgatus (strain ATCC 8482 / DSM 1447 / JCM 5826 / CCUG 4940 / NBRC 14291 / NCTC 11154) (Bacteroides vulgatus)).